We begin with the raw amino-acid sequence, 148 residues long: UPF0178 protein SUN_1096 (148 aa).

This sequence belongs to the UPF0178 family.

The sequence is that of UPF0178 protein SUN_1096 from Sulfurovum sp. (strain NBC37-1).